The primary structure comprises 603 residues: Prostaglandin G/H synthase 1 (603 aa).

Positions 1-27 (MSRGSRLHRWPLLLLLLLLLPPPPVLP) are cleaved as a signal peptide. The 39-residue stretch at 35 to 73 (PVNPCCYYPCQHQGICVRFGLDRYQCDCTRTGYSGPNCT) folds into the EGF-like domain. 4 disulfides stabilise this stretch: Cys-39–Cys-50, Cys-40–Cys-162, Cys-44–Cys-60, and Cys-62–Cys-72. N-linked (GlcNAc...) asparagine glycosylation is found at Asn-71, Asn-107, and Asn-147. His-210 functions as the Proton acceptor in the catalytic mechanism. Tyr-388 functions as the For cyclooxygenase activity in the catalytic mechanism. His-391 serves as a coordination point for heme b. Cys-572 and Cys-578 are oxidised to a cystine.

The protein belongs to the prostaglandin G/H synthase family. In terms of assembly, homodimer. The cofactor is heme b. N-glycosylated. N-linked glycosylation is necessary for enzymatic activity. In terms of tissue distribution, brain cortex. Isoform 2 is expressed in the cerebral cortex and heart.

The protein localises to the microsome membrane. Its subcellular location is the endoplasmic reticulum membrane. It catalyses the reaction (5Z,8Z,11Z,14Z)-eicosatetraenoate + AH2 + 2 O2 = prostaglandin H2 + A + H2O. The enzyme catalyses (5Z,8Z,11Z,14Z)-eicosatetraenoate + 2 O2 = prostaglandin G2. The catalysed reaction is prostaglandin G2 + AH2 = prostaglandin H2 + A + H2O. It carries out the reaction (9Z,12Z)-octadecadienoate + AH2 + O2 = (9R)-hydroxy-(10E,12Z)-octadecadienoate + A + H2O. It catalyses the reaction (9Z,12Z)-octadecadienoate + AH2 + O2 = (9S)-hydroxy-(10E,12Z)-octadecadienoate + A + H2O. The enzyme catalyses (9Z,12Z)-octadecadienoate + AH2 + O2 = (13S)-hydroxy-(9Z,11E)-octadecadienoate + A + H2O. The catalysed reaction is (9Z,12Z)-octadecadienoate + AH2 + O2 = (13R)-hydroxy-(9Z,11E)-octadecadienoate + A + H2O. It functions in the pathway lipid metabolism; prostaglandin biosynthesis. With respect to regulation, the cyclooxygenase activity is inhibited by nonsteroidal anti-inflammatory drugs (NSAIDs) including ibuprofen, flurbiprofen, ketoprofen, naproxen, flurbiprofen, anirolac, fenclofenac and diclofenac. Dual cyclooxygenase and peroxidase that plays an important role in the biosynthesis pathway of prostanoids, a class of C20 oxylipins mainly derived from arachidonate ((5Z,8Z,11Z,14Z)-eicosatetraenoate, AA, C20:4(n-6)), with a particular role in the inflammatory response. The cyclooxygenase activity oxygenates AA to the hydroperoxy endoperoxide prostaglandin G2 (PGG2), and the peroxidase activity reduces PGG2 to the hydroxy endoperoxide prostaglandin H2 (PGH2), the precursor of all 2-series prostaglandins and thromboxanes. This complex transformation is initiated by abstraction of hydrogen at carbon 13 (with S-stereochemistry), followed by insertion of molecular O2 to form the endoperoxide bridge between carbon 9 and 11 that defines prostaglandins. The insertion of a second molecule of O2 (bis-oxygenase activity) yields a hydroperoxy group in PGG2 that is then reduced to PGH2 by two electrons. Involved in the constitutive production of prostanoids in particular in the stomach and platelets. In gastric epithelial cells, it is a key step in the generation of prostaglandins, such as prostaglandin E2 (PGE2), which plays an important role in cytoprotection. In platelets, it is involved in the generation of thromboxane A2 (TXA2), which promotes platelet activation and aggregation, vasoconstriction and proliferation of vascular smooth muscle cells. Can also use linoleate (LA, (9Z,12Z)-octadecadienoate, C18:2(n-6)) as substrate and produce hydroxyoctadecadienoates (HODEs) in a regio- and stereospecific manner, being (9R)-HODE ((9R)-hydroxy-(10E,12Z)-octadecadienoate) and (13S)-HODE ((13S)-hydroxy-(9Z,11E)-octadecadienoate) its major products. In Canis lupus familiaris (Dog), this protein is Prostaglandin G/H synthase 1 (PTGS1).